Consider the following 201-residue polypeptide: Holliday junction resolvase RecU (201 aa).

4 residues coordinate Mg(2+): Thr87, Asp89, Glu102, and Gln121.

This sequence belongs to the RecU family. Requires Mg(2+) as cofactor.

The protein resides in the cytoplasm. The enzyme catalyses Endonucleolytic cleavage at a junction such as a reciprocal single-stranded crossover between two homologous DNA duplexes (Holliday junction).. Its function is as follows. Endonuclease that resolves Holliday junction intermediates in genetic recombination. Cleaves mobile four-strand junctions by introducing symmetrical nicks in paired strands. Promotes annealing of linear ssDNA with homologous dsDNA. Required for DNA repair, homologous recombination and chromosome segregation. The sequence is that of Holliday junction resolvase RecU from Listeria monocytogenes serotype 4b (strain F2365).